Here is a 349-residue protein sequence, read N- to C-terminus: Holliday junction branch migration complex subunit RuvB (349 aa).

The large ATPase domain (RuvB-L) stretch occupies residues 1–183 (MTDPSRLVTP…FGIPIRLNFY (183 aa)). Residues leucine 22, arginine 23, glycine 64, lysine 67, threonine 68, threonine 69, 130–132 (EDF), arginine 173, tyrosine 183, and arginine 220 each bind ATP. A Mg(2+)-binding site is contributed by threonine 68. The interval 184 to 254 (TIEELESIVT…IADHALGALE (71 aa)) is small ATPAse domain (RuvB-S). The tract at residues 257–349 (SAGLDAMDRR…GLFGDTGDQE (93 aa)) is head domain (RuvB-H). DNA contacts are provided by arginine 293, arginine 312, and arginine 317.

Belongs to the RuvB family. Homohexamer. Forms an RuvA(8)-RuvB(12)-Holliday junction (HJ) complex. HJ DNA is sandwiched between 2 RuvA tetramers; dsDNA enters through RuvA and exits via RuvB. An RuvB hexamer assembles on each DNA strand where it exits the tetramer. Each RuvB hexamer is contacted by two RuvA subunits (via domain III) on 2 adjacent RuvB subunits; this complex drives branch migration. In the full resolvosome a probable DNA-RuvA(4)-RuvB(12)-RuvC(2) complex forms which resolves the HJ.

It localises to the cytoplasm. The enzyme catalyses ATP + H2O = ADP + phosphate + H(+). Its function is as follows. The RuvA-RuvB-RuvC complex processes Holliday junction (HJ) DNA during genetic recombination and DNA repair, while the RuvA-RuvB complex plays an important role in the rescue of blocked DNA replication forks via replication fork reversal (RFR). RuvA specifically binds to HJ cruciform DNA, conferring on it an open structure. The RuvB hexamer acts as an ATP-dependent pump, pulling dsDNA into and through the RuvAB complex. RuvB forms 2 homohexamers on either side of HJ DNA bound by 1 or 2 RuvA tetramers; 4 subunits per hexamer contact DNA at a time. Coordinated motions by a converter formed by DNA-disengaged RuvB subunits stimulates ATP hydrolysis and nucleotide exchange. Immobilization of the converter enables RuvB to convert the ATP-contained energy into a lever motion, pulling 2 nucleotides of DNA out of the RuvA tetramer per ATP hydrolyzed, thus driving DNA branch migration. The RuvB motors rotate together with the DNA substrate, which together with the progressing nucleotide cycle form the mechanistic basis for DNA recombination by continuous HJ branch migration. Branch migration allows RuvC to scan DNA until it finds its consensus sequence, where it cleaves and resolves cruciform DNA. This chain is Holliday junction branch migration complex subunit RuvB, found in Rhodopseudomonas palustris (strain ATCC BAA-98 / CGA009).